The sequence spans 535 residues: Peptide chain release factor 3 (535 aa).

The tr-type G domain maps to 8–277; that stretch reads KRRRTFAIIS…TLVDLAPPPG (270 aa). Residues 17-24, 85-89, and 139-142 each bind GTP; these read SHPDAGKT, DTPGH, and NKLD.

This sequence belongs to the TRAFAC class translation factor GTPase superfamily. Classic translation factor GTPase family. PrfC subfamily.

It is found in the cytoplasm. Increases the formation of ribosomal termination complexes and stimulates activities of RF-1 and RF-2. It binds guanine nucleotides and has strong preference for UGA stop codons. It may interact directly with the ribosome. The stimulation of RF-1 and RF-2 is significantly reduced by GTP and GDP, but not by GMP. The chain is Peptide chain release factor 3 from Nitrosomonas eutropha (strain DSM 101675 / C91 / Nm57).